The chain runs to 505 residues: RNA-splicing ligase RtcB homolog (505 aa).

Residues D119, C122, H227, H259, and H353 each coordinate Mn(2+). A GMP-binding site is contributed by N226–E230. Residues H353–N354, G402–M405, S409, H428–G431, and K504 each bind GMP. Catalysis depends on H428, which acts as the GMP-histidine intermediate.

It belongs to the RtcB family. In terms of assembly, catalytic component of the tRNA-splicing ligase complex. Mn(2+) is required as a cofactor.

The enzyme catalyses a 3'-end 3'-phospho-ribonucleotide-RNA + a 5'-end dephospho-ribonucleoside-RNA + GTP = a ribonucleotidyl-ribonucleotide-RNA + GMP + diphosphate. It carries out the reaction a 3'-end 2',3'-cyclophospho-ribonucleotide-RNA + a 5'-end dephospho-ribonucleoside-RNA + GTP + H2O = a ribonucleotidyl-ribonucleotide-RNA + GMP + diphosphate + H(+). Catalytic subunit of the tRNA-splicing ligase complex that acts by directly joining spliced tRNA halves to mature-sized tRNAs by incorporating the precursor-derived splice junction phosphate into the mature tRNA as a canonical 3',5'-phosphodiester. May act as an RNA ligase with broad substrate specificity, and may function toward other RNAs. In Nematostella vectensis (Starlet sea anemone), this protein is RNA-splicing ligase RtcB homolog.